The primary structure comprises 325 residues: Tetraacyldisaccharide 4'-kinase (325 aa).

An ATP-binding site is contributed by 55-62 (TAGGNGKT).

Belongs to the LpxK family.

The enzyme catalyses a lipid A disaccharide + ATP = a lipid IVA + ADP + H(+). It functions in the pathway glycolipid biosynthesis; lipid IV(A) biosynthesis; lipid IV(A) from (3R)-3-hydroxytetradecanoyl-[acyl-carrier-protein] and UDP-N-acetyl-alpha-D-glucosamine: step 6/6. Transfers the gamma-phosphate of ATP to the 4'-position of a tetraacyldisaccharide 1-phosphate intermediate (termed DS-1-P) to form tetraacyldisaccharide 1,4'-bis-phosphate (lipid IVA). In Cronobacter sakazakii (strain ATCC BAA-894) (Enterobacter sakazakii), this protein is Tetraacyldisaccharide 4'-kinase.